We begin with the raw amino-acid sequence, 513 residues long: Glutamyl-tRNA(Gln) amidotransferase subunit A (513 aa).

Active-site charge relay system residues include Lys-85 and Ser-160. The Acyl-ester intermediate role is filled by Ser-184.

This sequence belongs to the amidase family. GatA subfamily. As to quaternary structure, heterotrimer of A, B and C subunits.

The enzyme catalyses L-glutamyl-tRNA(Gln) + L-glutamine + ATP + H2O = L-glutaminyl-tRNA(Gln) + L-glutamate + ADP + phosphate + H(+). Functionally, allows the formation of correctly charged Gln-tRNA(Gln) through the transamidation of misacylated Glu-tRNA(Gln) in organisms which lack glutaminyl-tRNA synthetase. The reaction takes place in the presence of glutamine and ATP through an activated gamma-phospho-Glu-tRNA(Gln). The sequence is that of Glutamyl-tRNA(Gln) amidotransferase subunit A from Bifidobacterium longum subsp. infantis (strain ATCC 15697 / DSM 20088 / JCM 1222 / NCTC 11817 / S12).